A 218-amino-acid polypeptide reads, in one-letter code: RNA polymerase sigma-H factor (218 aa).

A Polymerase core binding motif is present at residues Asp-62–Ile-75. Residues Tyr-182–Gln-201 constitute a DNA-binding region (H-T-H motif).

This sequence belongs to the sigma-70 factor family. Interacts transiently with the RNAP core.

In terms of biological role, sigma factors are initiation factors that promote the attachment of RNA polymerase (RNAP) to specific initiation sites and are then released. This sigma factor is involved in the transition to post-exponential phase in the beginning of sporulation. It is also required for transcription of several stationary phase genes. Association with the RNAP core increases rapidly in early exponential phase, and reamins constant expression level after. This is RNA polymerase sigma-H factor (sigH) from Bacillus subtilis (strain 168).